A 133-amino-acid polypeptide reads, in one-letter code: MANHDPISDMLTRIRNASEKRHETTKIPASRMTRSIAKVLQQEGFISEISEQGEGVRTELVLSLKYSGKHRLPTIRSMQRVSKPGLRIYKNTRGLPKVLGGLGVAIISTSKGVMSDRDARREGVGGEVLCYVY.

This sequence belongs to the universal ribosomal protein uS8 family. Part of the 30S ribosomal subunit. Contacts proteins S5 and S12.

In terms of biological role, one of the primary rRNA binding proteins, it binds directly to 16S rRNA central domain where it helps coordinate assembly of the platform of the 30S subunit. This Parasynechococcus marenigrum (strain WH8102) protein is Small ribosomal subunit protein uS8.